A 417-amino-acid polypeptide reads, in one-letter code: Glucose-1-phosphate adenylyltransferase (417 aa).

Alpha-D-glucose 1-phosphate contacts are provided by residues Tyr-105, Gly-170, 185 to 186, and Ser-203; that span reads EK.

It belongs to the bacterial/plant glucose-1-phosphate adenylyltransferase family. In terms of assembly, homotetramer.

The enzyme catalyses alpha-D-glucose 1-phosphate + ATP + H(+) = ADP-alpha-D-glucose + diphosphate. The protein operates within glycan biosynthesis; glycogen biosynthesis. In terms of biological role, involved in the biosynthesis of ADP-glucose, a building block required for the elongation reactions to produce glycogen. Catalyzes the reaction between ATP and alpha-D-glucose 1-phosphate (G1P) to produce pyrophosphate and ADP-Glc. This is Glucose-1-phosphate adenylyltransferase from Granulibacter bethesdensis (strain ATCC BAA-1260 / CGDNIH1).